The primary structure comprises 57 residues: uncharacterized protein (57 aa).

The segment at 31-57 is disordered; sequence HHQTSSFNPMPSEVSLHTSHNFPHTTF. Residues 33 to 57 are compositionally biased toward polar residues; sequence QTSSFNPMPSEVSLHTSHNFPHTTF.

This is an uncharacterized protein from Invertebrate iridescent virus 6 (IIV-6).